Consider the following 305-residue polypeptide: UDP-3-O-acyl-N-acetylglucosamine deacetylase (305 aa).

H78, H237, and D241 together coordinate Zn(2+). Residue H264 is the Proton donor of the active site.

The protein belongs to the LpxC family. Zn(2+) is required as a cofactor.

The catalysed reaction is a UDP-3-O-[(3R)-3-hydroxyacyl]-N-acetyl-alpha-D-glucosamine + H2O = a UDP-3-O-[(3R)-3-hydroxyacyl]-alpha-D-glucosamine + acetate. It participates in glycolipid biosynthesis; lipid IV(A) biosynthesis; lipid IV(A) from (3R)-3-hydroxytetradecanoyl-[acyl-carrier-protein] and UDP-N-acetyl-alpha-D-glucosamine: step 2/6. Its function is as follows. Catalyzes the hydrolysis of UDP-3-O-myristoyl-N-acetylglucosamine to form UDP-3-O-myristoylglucosamine and acetate, the committed step in lipid A biosynthesis. This chain is UDP-3-O-acyl-N-acetylglucosamine deacetylase, found in Burkholderia mallei (strain NCTC 10247).